The sequence spans 484 residues: Ornithine decarboxylase (484 aa).

Position 114 is an N6-(pyridoxal phosphate)lysine (lysine 114). Pyridoxal 5'-phosphate contacts are provided by residues serine 245, glycine 282, and 315-318 (EPGR). 381–382 (FD) contacts substrate. Residue cysteine 422 is the Proton donor; shared with dimeric partner of the active site. Aspartate 423 contributes to the substrate binding site. Residue tyrosine 452 coordinates pyridoxal 5'-phosphate.

The protein belongs to the Orn/Lys/Arg decarboxylase class-II family. As to quaternary structure, homodimer. Only the dimer is catalytically active, as the active sites are constructed of residues from both monomers. Requires pyridoxal 5'-phosphate as cofactor.

The protein resides in the cytoplasm. The catalysed reaction is L-ornithine + H(+) = putrescine + CO2. The protein operates within amine and polyamine biosynthesis; putrescine biosynthesis via L-ornithine pathway; putrescine from L-ornithine: step 1/1. Its activity is regulated as follows. Inhibited by antizyme (AZ) OAZ1 in response to polyamine levels. AZ inhibits the assembly of the functional homodimer by binding to ODC monomers and targeting them for ubiquitin-independent proteolytic destruction by the 26S proteasome. Functionally, catalyzes the first and rate-limiting step of polyamine biosynthesis that converts ornithine into putrescine, which is the precursor for the polyamines, spermidine and spermine. Polyamines are essential for cell proliferation and are implicated in cellular processes, ranging from DNA replication to apoptosis. This is Ornithine decarboxylase (spe-1) from Neurospora crassa (strain ATCC 24698 / 74-OR23-1A / CBS 708.71 / DSM 1257 / FGSC 987).